Here is a 246-residue protein sequence, read N- to C-terminus: Probable phosphatase ASA_1316 (246 aa).

Zn(2+)-binding residues include His8, His10, His16, His41, Glu74, His102, His132, Asp193, and His195.

This sequence belongs to the PHP family. The cofactor is Zn(2+).

In Aeromonas salmonicida (strain A449), this protein is Probable phosphatase ASA_1316.